The chain runs to 275 residues: NAD kinase (275 aa).

The active-site Proton acceptor is the aspartate 68. NAD(+)-binding positions include aspartate 68–glycine 69, arginine 73, asparagine 136–glutamate 137, lysine 147, arginine 164, aspartate 166, threonine 177–serine 182, alanine 201, and glutamine 236.

This sequence belongs to the NAD kinase family. The cofactor is a divalent metal cation.

It localises to the cytoplasm. It carries out the reaction NAD(+) + ATP = ADP + NADP(+) + H(+). Its function is as follows. Involved in the regulation of the intracellular balance of NAD and NADP, and is a key enzyme in the biosynthesis of NADP. Catalyzes specifically the phosphorylation on 2'-hydroxyl of the adenosine moiety of NAD to yield NADP. This chain is NAD kinase, found in Methanosarcina acetivorans (strain ATCC 35395 / DSM 2834 / JCM 12185 / C2A).